A 117-amino-acid chain; its full sequence is Large ribosomal subunit protein bL20 (117 aa).

It belongs to the bacterial ribosomal protein bL20 family.

In terms of biological role, binds directly to 23S ribosomal RNA and is necessary for the in vitro assembly process of the 50S ribosomal subunit. It is not involved in the protein synthesizing functions of that subunit. The sequence is that of Large ribosomal subunit protein bL20 from Magnetococcus marinus (strain ATCC BAA-1437 / JCM 17883 / MC-1).